Here is a 367-residue protein sequence, read N- to C-terminus: Glycolate oxidase 1 (367 aa).

Residue M1 is modified to N-acetylmethionine. A glyoxylate-binding site is contributed by Y24. FMN contacts are provided by residues 77–79 (PTA), S106, 127–129 (QLY), and T155. Y129 provides a ligand contact to glyoxylate. Position 164 (R164) interacts with glyoxylate. Positions 230 and 252 each coordinate FMN. Residues H254 and R257 each coordinate glyoxylate. The active-site Proton acceptor is H254. FMN-binding positions include 285–289 (DGGVR) and 308–309 (GR).

This sequence belongs to the FMN-dependent alpha-hydroxy acid dehydrogenase family. In terms of assembly, homotetramer. FMN is required as a cofactor.

It is found in the peroxisome. The enzyme catalyses glycolate + O2 = glyoxylate + H2O2. The protein operates within photosynthesis; photorespiration; glycine from 2-phosphoglycolate: step 2/3. Its function is as follows. Catalyzes the oxidation of glycolate to glyoxylate, with a reduction of O2 to H2O2. Is a key enzyme in photorespiration in green plants. The protein is Glycolate oxidase 1 (GLO1) of Arabidopsis thaliana (Mouse-ear cress).